The chain runs to 628 residues: Patulin synthase (628 aa).

The N-terminal stretch at 1–19 (MRLTSGIFHAAIAVAAVGA) is a signal peptide. A glycan (N-linked (GlcNAc...) asparagine) is linked at Asn-49. FAD contacts are provided by residues 61-62 (TA) and 82-83 (EA). A glycan (N-linked (GlcNAc...) asparagine) is linked at Asn-93. 148 to 151 (NYMA) contributes to the FAD binding site. Residues Asn-198, Asn-261, Asn-283, Asn-429, Asn-486, and Asn-526 are each glycosylated (N-linked (GlcNAc...) asparagine). His-564 acts as the Proton acceptor in catalysis. Asn-575 is a glycosylation site (N-linked (GlcNAc...) asparagine). FAD is bound by residues Ala-598 and 609–610 (PQ).

It belongs to the GMC oxidoreductase family. The cofactor is FAD.

It localises to the cytoplasm. It is found in the cell cortex. Its subcellular location is the vacuole. The protein resides in the secreted. The protein localises to the cell wall. The catalysed reaction is (E)-ascladiol + A = patulin + AH2. The protein operates within mycotoxin biosynthesis; patulin biosynthesis. Functionally, patulin synthase; part of the gene cluster that mediates the biosynthesis of patulin, an acetate-derived tetraketide mycotoxin produced by several fungal species that shows antimicrobial properties against several bacteria. PatE catalyzes the last step of the pathway which is the conversion of E-ascladiol to patulin. The pathway begins with the synthesis of 6-methylsalicylic acid by the polyketide synthase (PKS) patK via condensation of acetate and malonate units. The 6-methylsalicylic acid decarboxylase patG then catalyzes the decarboxylation of 6-methylsalicylic acid to yield m-cresol (also known as 3-methylphenol). These first reactions occur in the cytosol. The intermediate m-cresol is then transported into the endoplasmic reticulum where the cytochrome P450 monooxygenase patH converts it to m-hydroxybenzyl alcohol, which is further converted to gentisyl alcohol by the cytochrome P450 monooxygenase patI. The oxidoreductases patJ and patO further convert gentisyl alcohol to isoepoxydon in the vacuole. PatN catalyzes then the transformation of isoepoxydon into phyllostine. The cluster protein patF is responsible for the conversion from phyllostine to neopatulin whereas the alcohol dehydrogenase patD converts neopatulin to E-ascladiol. The steps between isoepoxydon and E-ascladiol occur in the cytosol, and E-ascladiol is probably secreted to the extracellular space by one of the cluster-specific transporters patC or patM. Finally, the secreted patulin synthase patE catalyzes the conversion of E-ascladiol to patulin. The chain is Patulin synthase from Penicillium expansum (Blue mold rot fungus).